A 499-amino-acid chain; its full sequence is Isoflavone 2'-hydroxylase (499 aa).

C436 contributes to the heme binding site.

This sequence belongs to the cytochrome P450 family. Heme is required as a cofactor.

It localises to the membrane. It catalyses the reaction a 2'-unsubstituted isoflavone + reduced [NADPH--hemoprotein reductase] + O2 = a 2'-hydroxyisoflavone + oxidized [NADPH--hemoprotein reductase] + H2O + H(+). Catalyzes the hydroxylation of isoflavones, daidzein and formononetin, to yield 2'-hydroxyisoflavones, 2'-hydroxydaidzein, and 2'-hydroxyformononetin, respectively. This Glycyrrhiza echinata (Licorice) protein is Isoflavone 2'-hydroxylase (CYP81E1).